We begin with the raw amino-acid sequence, 284 residues long: Bifunctional protein FolD (284 aa).

Residues Gly166–Ser168 and Ile232 contribute to the NADP(+) site.

It belongs to the tetrahydrofolate dehydrogenase/cyclohydrolase family. In terms of assembly, homodimer.

The enzyme catalyses (6R)-5,10-methylene-5,6,7,8-tetrahydrofolate + NADP(+) = (6R)-5,10-methenyltetrahydrofolate + NADPH. It carries out the reaction (6R)-5,10-methenyltetrahydrofolate + H2O = (6R)-10-formyltetrahydrofolate + H(+). It participates in one-carbon metabolism; tetrahydrofolate interconversion. Functionally, catalyzes the oxidation of 5,10-methylenetetrahydrofolate to 5,10-methenyltetrahydrofolate and then the hydrolysis of 5,10-methenyltetrahydrofolate to 10-formyltetrahydrofolate. This is Bifunctional protein FolD from Buchnera aphidicola subsp. Cinara cedri (strain Cc).